The chain runs to 186 residues: ATP synthase subunit delta (186 aa).

Belongs to the ATPase delta chain family. In terms of assembly, F-type ATPases have 2 components, F(1) - the catalytic core - and F(0) - the membrane proton channel. F(1) has five subunits: alpha(3), beta(3), gamma(1), delta(1), epsilon(1). F(0) has three main subunits: a(1), b(2) and c(10-14). The alpha and beta chains form an alternating ring which encloses part of the gamma chain. F(1) is attached to F(0) by a central stalk formed by the gamma and epsilon chains, while a peripheral stalk is formed by the delta and b chains.

It is found in the cell inner membrane. Its function is as follows. F(1)F(0) ATP synthase produces ATP from ADP in the presence of a proton or sodium gradient. F-type ATPases consist of two structural domains, F(1) containing the extramembraneous catalytic core and F(0) containing the membrane proton channel, linked together by a central stalk and a peripheral stalk. During catalysis, ATP synthesis in the catalytic domain of F(1) is coupled via a rotary mechanism of the central stalk subunits to proton translocation. In terms of biological role, this protein is part of the stalk that links CF(0) to CF(1). It either transmits conformational changes from CF(0) to CF(1) or is implicated in proton conduction. The polypeptide is ATP synthase subunit delta (Nitrobacter hamburgensis (strain DSM 10229 / NCIMB 13809 / X14)).